The following is a 306-amino-acid chain: Ribosomal protein L11 methyltransferase (306 aa).

S-adenosyl-L-methionine-binding residues include T154, G179, D201, and N242.

The protein belongs to the methyltransferase superfamily. PrmA family.

It is found in the cytoplasm. The catalysed reaction is L-lysyl-[protein] + 3 S-adenosyl-L-methionine = N(6),N(6),N(6)-trimethyl-L-lysyl-[protein] + 3 S-adenosyl-L-homocysteine + 3 H(+). Functionally, methylates ribosomal protein L11. In Xylella fastidiosa (strain Temecula1 / ATCC 700964), this protein is Ribosomal protein L11 methyltransferase.